A 512-amino-acid chain; its full sequence is 2,3-bisphosphoglycerate-independent phosphoglycerate mutase (512 aa).

2 residues coordinate Mn(2+): Asp13 and Ser63. The active-site Phosphoserine intermediate is Ser63. Residues His124, 154 to 155 (RD), Arg186, Arg192, 262 to 265 (RPDR), and Lys337 each bind substrate. Asp404, His408, Asp445, His446, and His463 together coordinate Mn(2+).

This sequence belongs to the BPG-independent phosphoglycerate mutase family. In terms of assembly, monomer. It depends on Mn(2+) as a cofactor.

It carries out the reaction (2R)-2-phosphoglycerate = (2R)-3-phosphoglycerate. It functions in the pathway carbohydrate degradation; glycolysis; pyruvate from D-glyceraldehyde 3-phosphate: step 3/5. Its function is as follows. Essential for rapid growth and for sporulation. Catalyzes the interconversion of 2-phosphoglycerate and 3-phosphoglycerate. The chain is 2,3-bisphosphoglycerate-independent phosphoglycerate mutase from Oceanobacillus iheyensis (strain DSM 14371 / CIP 107618 / JCM 11309 / KCTC 3954 / HTE831).